Reading from the N-terminus, the 284-residue chain is P2R1A-PPP2R2A-interacting phosphatase regulator 1 (284 aa).

The segment at 1 to 65 is disordered; the sequence is MAQEKMELDL…RRNSTTFPSR (65 aa). Positions 20-29 are enriched in gly residues; the sequence is EGGGPGGGGL. S32 bears the Phosphoserine mark. S34 is modified (phosphoserine; by CHEK1). Residues S42, S45, S59, and S73 each carry the phosphoserine modification. A Glycyl lysine isopeptide (Lys-Gly) (interchain with G-Cter in SUMO1) cross-link involves residue K86. Phosphoserine occurs at positions 140 and 144. T146 bears the Phosphothreonine mark. Residues 164–185 form a disordered region; that stretch reads SNGLPPSPIPSPTTRFTTRRSQ. Over residues 175-185 the composition is skewed to low complexity; it reads PTTRFTTRRSQ. Phosphoserine is present on residues S184 and S186. A disordered region spans residues 233–284; it reads GVCVSSDTLDGNSSSAGSSCNSPAKVSTTTDSPVSPAQAASPFIPVDELSSK. Over residues 243–254 the composition is skewed to low complexity; sequence GNSSSAGSSCNS. Polar residues predominate over residues 256 to 267; the sequence is AKVSTTTDSPVS. Phosphoserine is present on residues S264, S267, and S273.

Belongs to the FAM122 family. Interacts with PPP2CA and PPP2R1A. Interacts (via its N-terminus) with PPP2R2A; the interaction is direct and this interaction inhibits PP2A activity. The CHEK1-mediated Ser-34 phosphorylated form interacts with 14-3-3 proteins. Post-translationally, CHEK1-mediated phosphorylation at Ser-34 negatively regulates its ability to inhibit serine/threonine-protein phosphatase 2A (PP2A) activity. Phosphorylation leads to its release from the PP2A complex and its sequestration by 14-3-3 proteins in the cytoplasm resulting in its inability to translocate to the nucleus, where it otherwise inhibits PP2A.

It is found in the nucleus. Its subcellular location is the cytoplasm. In terms of biological role, acts as an inhibitor of serine/threonine-protein phosphatase 2A (PP2A) activity. Inhibits PP2A activity by blocking the substrate binding site on PPP2R2A and the active site of PPP2CA. Potentiates ubiquitin-mediated proteasomal degradation of serine/threonine-protein phosphatase 2A catalytic subunit alpha (PPP2CA). Inhibits PP2A-mediated dephosphorylation of WEE1, promoting ubiquitin-mediated proteolysis of WEE1, thereby releasing G2/M checkpoint. The chain is P2R1A-PPP2R2A-interacting phosphatase regulator 1 from Mus musculus (Mouse).